Reading from the N-terminus, the 233-residue chain is Orotidine 5'-phosphate decarboxylase (233 aa).

Substrate contacts are provided by residues Asp-13, Lys-35, 62 to 71 (DLKFHDIPNT), Thr-122, Arg-182, Gln-191, Gly-211, and Arg-212. Lys-64 acts as the Proton donor in catalysis.

It belongs to the OMP decarboxylase family. Type 1 subfamily. Homodimer.

It carries out the reaction orotidine 5'-phosphate + H(+) = UMP + CO2. The protein operates within pyrimidine metabolism; UMP biosynthesis via de novo pathway; UMP from orotate: step 2/2. Catalyzes the decarboxylation of orotidine 5'-monophosphate (OMP) to uridine 5'-monophosphate (UMP). The polypeptide is Orotidine 5'-phosphate decarboxylase (Pseudomonas putida (strain GB-1)).